The chain runs to 259 residues: Imidazole glycerol phosphate synthase subunit HisF (259 aa).

Catalysis depends on residues D11 and D130.

The protein belongs to the HisA/HisF family. As to quaternary structure, heterodimer of HisH and HisF.

It is found in the cytoplasm. The catalysed reaction is 5-[(5-phospho-1-deoxy-D-ribulos-1-ylimino)methylamino]-1-(5-phospho-beta-D-ribosyl)imidazole-4-carboxamide + L-glutamine = D-erythro-1-(imidazol-4-yl)glycerol 3-phosphate + 5-amino-1-(5-phospho-beta-D-ribosyl)imidazole-4-carboxamide + L-glutamate + H(+). It participates in amino-acid biosynthesis; L-histidine biosynthesis; L-histidine from 5-phospho-alpha-D-ribose 1-diphosphate: step 5/9. Its function is as follows. IGPS catalyzes the conversion of PRFAR and glutamine to IGP, AICAR and glutamate. The HisF subunit catalyzes the cyclization activity that produces IGP and AICAR from PRFAR using the ammonia provided by the HisH subunit. The chain is Imidazole glycerol phosphate synthase subunit HisF from Desulforapulum autotrophicum (strain ATCC 43914 / DSM 3382 / VKM B-1955 / HRM2) (Desulfobacterium autotrophicum).